The following is a 209-amino-acid chain: ATP-dependent dethiobiotin synthetase BioD (209 aa).

13–18 (DIGKTV) provides a ligand contact to ATP. Residue Thr-17 coordinates Mg(2+). Residue Lys-33 is part of the active site. Residues Arg-47 and Glu-100 each coordinate Mg(2+). Residues 100–103 (EGAG) and 184–186 (PRL) contribute to the ATP site.

Belongs to the dethiobiotin synthetase family. Homodimer. Mg(2+) is required as a cofactor.

The protein localises to the cytoplasm. The catalysed reaction is (7R,8S)-7,8-diammoniononanoate + CO2 + ATP = (4R,5S)-dethiobiotin + ADP + phosphate + 3 H(+). It participates in cofactor biosynthesis; biotin biosynthesis; biotin from 7,8-diaminononanoate: step 1/2. Its function is as follows. Catalyzes a mechanistically unusual reaction, the ATP-dependent insertion of CO2 between the N7 and N8 nitrogen atoms of 7,8-diaminopelargonic acid (DAPA, also called 7,8-diammoniononanoate) to form a ureido ring. This is ATP-dependent dethiobiotin synthetase BioD from Rhodopseudomonas palustris (strain BisB18).